Reading from the N-terminus, the 402-residue chain is MKYDIKLRFEVEGIVEKTDVIGAIFGQTENLFGDEFDLRELQDKGRLGRIIVEIRTKGGKSEGEIIIPSNLDRIETALIAAMVESVDKVGPYNSKFELIEIEDIRAEKLKKIIERAKGILSSWSKEKSLDIKEVINEISSAVKVGEITEYGPERLPAGPDVDKDPNLIIVEGRADVINLLRYGYKNVIAVEGATSRIPETVVSLSKMKKTVIAFLDGDHGGDLILKELLSNNVKIDFVARAPVGREVEELTGKEIAKALSNMMPLTQYLKKIQEAEQAIAKNVIAKEEKPIQLEATQQLVQITLPQNVLEEIKKLPGTLEGVLYDNNWNLIEKVQVRDIIPKLEAYEDNKVAYIVFDGVITQRLLDLASQKNIKMIIGARIGGINKRPQNVDILTFTDIISS.

Residues 165–243 form the Toprim domain; the sequence is PNLIIVEGRA…KIDFVARAPV (79 aa). E171, D216, and D218 together coordinate Mg(2+).

The protein belongs to the archaeal DnaG primase family. As to quaternary structure, forms a ternary complex with MCM helicase and DNA. Component of the archaeal exosome complex. Requires Mg(2+) as cofactor.

The enzyme catalyses ssDNA + n NTP = ssDNA/pppN(pN)n-1 hybrid + (n-1) diphosphate.. Functionally, RNA polymerase that catalyzes the synthesis of short RNA molecules used as primers for DNA polymerase during DNA replication. Also part of the exosome, which is a complex involved in RNA degradation. Acts as a poly(A)-binding protein that enhances the interaction between heteromeric, adenine-rich transcripts and the exosome. This Saccharolobus islandicus (strain Y.N.15.51 / Yellowstone #2) (Sulfolobus islandicus) protein is DNA primase DnaG.